The sequence spans 610 residues: Autophagy-related protein 22-1 (610 aa).

A compositionally biased stretch (pro residues) spans 1-11 (MAFTPSSPPSP). Residues 1 to 29 (MAFTPSSPPSPAADASQRPSRYPGEDTTP) are disordered. The chain crosses the membrane as a helical span at residues 35–55 (ILGWYAYGIAAEVFAVCGVGS). Asn-90 carries N-linked (GlcNAc...) asparagine glycosylation. 3 helical membrane passes run 120–140 (SFAMYTFSLAVLVQALTLISF), 152–171 (TLLLAFGFIGSATSMLFVFV), and 189–209 (CLGSSFVVLNSFLPVLVANDP). Residues 229–265 (GQFEPRDSFSERNPEFESQYTPGIGLGSKPSTNATSP) are disordered. The span at 232–243 (EPRDSFSERNPE) shows a compositional bias: basic and acidic residues. A glycan (N-linked (GlcNAc...) asparagine) is linked at Asn-261. 8 helical membrane passes run 278 to 298 (VGLGYCAAVLVQILSIGLLFA), 310 to 330 (TLPLRFVLLLVGIWWFSFTMV), 384 to 404 (VFLVAWFLLSDAIATVSGTAI), 418 to 438 (VGCLSITATLSGMTGAFLWPV), 453 to 473 (LCIALFEIIPLYGMLAYIPLF), 488 to 510 (FPLAIVHGIVSGGLSSYCRSFFG), 522 to 544 (YALYAATDKGSSVIGPAIVGMLI), and 553 to 573 (GFFFIAILIVLPIPLVWMVNA). Residues 588–610 (AKGQESETGEPGEEAEGLLARGA) are disordered. A compositionally biased stretch (acidic residues) spans 594-603 (ETGEPGEEAE).

It belongs to the ATG22 family.

Its subcellular location is the vacuole membrane. In terms of biological role, vacuolar effluxer which mediate the efflux of amino acids resulting from autophagic degradation. The release of autophagic amino acids allows the maintenance of protein synthesis and viability during nitrogen starvation. The polypeptide is Autophagy-related protein 22-1 (atg22-1) (Aspergillus terreus (strain NIH 2624 / FGSC A1156)).